A 520-amino-acid chain; its full sequence is Probable E3 ubiquitin-protein ligase rbrA (520 aa).

A compositionally biased stretch (acidic residues) spans 1–42 (MTDDEMYEDYDVDDDSAEESGNESLDDTEYDDAATQEFDFDE). The disordered stretch occupies residues 1-51 (MTDDEMYEDYDVDDDSAEESGNESLDDTEYDDAATQEFDFDENQPQRSLGK). Residues 135–354 (GNVSCLICLE…GGYYNCNKYD (220 aa)) form a TRIAD supradomain region. C139, C142, C156, H158, C161, C164, C184, C189, C228, C233, C250, C252, C257, C260, H268, C273, C300, and C303 together coordinate Zn(2+). Residues 139 to 189 (CLICLEDYPPTQTFALICNHRYCLPCYKNYLEIKVSEGPECIYTPCPAPKC) form an RING-type 1 zinc finger. Residues 208–273 (ERFNNFILKS…EIGDHMPCPC (66 aa)) form an IBR-type zinc finger. Residues 300-333 (CPECRSPIEKNGGCMHMTCRKNAGGCGFEFCWLC) form an RING-type 2; atypical zinc finger. C313 is a catalytic residue. 6 residues coordinate Zn(2+): C318, C325, C330, C333, H340, and C350.

The protein belongs to the RBR family.

The catalysed reaction is [E2 ubiquitin-conjugating enzyme]-S-ubiquitinyl-L-cysteine + [acceptor protein]-L-lysine = [E2 ubiquitin-conjugating enzyme]-L-cysteine + [acceptor protein]-N(6)-ubiquitinyl-L-lysine.. It functions in the pathway protein modification; protein ubiquitination. Might act as an E3 ubiquitin-protein ligase. Appears to be required for normal cell-type proportioning and cell sorting during multicellular development. In addition to being necessary for a normal percentage of prestalk cells and the organization of the slug, rbrA is also necessary for spore cell viability. The chain is Probable E3 ubiquitin-protein ligase rbrA (rbrA) from Dictyostelium discoideum (Social amoeba).